Reading from the N-terminus, the 226-residue chain is Ornithine decarboxylase antizyme (226 aa).

Belongs to the ODC antizyme family. As to quaternary structure, interacts with ODC and thereby sterically blocks ODC homodimerization.

Functionally, ornithine decarboxylase (ODC) antizyme protein that negatively regulates ODC activity and intracellular polyamine biosynthesis in response to increased intracellular polyamine levels. Binds to ODC monomers, inhibiting the assembly of the functional ODC homodimer, and targets the monomers for ubiquitin-independent proteolytic destruction by the 26S proteasome. The protein is Ornithine decarboxylase antizyme (spa1) of Schizosaccharomyces pombe (strain 972 / ATCC 24843) (Fission yeast).